A 513-amino-acid chain; its full sequence is Serine/threonine-protein kinase ppk8 (513 aa).

Residues 98-114 show a composition bias toward low complexity; the sequence is LSSTLTSMSEESSSTES. The disordered stretch occupies residues 98–120; the sequence is LSSTLTSMSEESSSTESKFATLN. The Protein kinase domain maps to 241-505; sequence GKLNNVIGEG…ISGARSTTWM (265 aa). ATP contacts are provided by residues 247–255 and Lys270; that span reads IGEGASSFI. Asp364 (proton acceptor) is an active-site residue.

This sequence belongs to the protein kinase superfamily. Ser/Thr protein kinase family.

It localises to the cytoplasm. Its subcellular location is the nucleus. It carries out the reaction L-seryl-[protein] + ATP = O-phospho-L-seryl-[protein] + ADP + H(+). It catalyses the reaction L-threonyl-[protein] + ATP = O-phospho-L-threonyl-[protein] + ADP + H(+). The polypeptide is Serine/threonine-protein kinase ppk8 (ppk8) (Schizosaccharomyces pombe (strain 972 / ATCC 24843) (Fission yeast)).